Consider the following 269-residue polypeptide: Type II iodothyronine deiodinase (269 aa).

Topologically, residues 1 to 9 (MGILSVDLL) are lumenal. A helical; Signal-anchor for type III membrane protein transmembrane segment spans residues 10–34 (ITLQILPVFFSNCLFLALYDSVILL). The Cytoplasmic segment spans residues 35–269 (KHVVLLLSRS…KNFSKRUKKT (235 aa)). U133 is an active-site residue. Non-standard amino acids (selenocysteine) are located at U133 and U266.

It belongs to the iodothyronine deiodinase family. As to quaternary structure, predominantly monomer. Can form homodimers but homodimerization is not essential for enzyme activity. Interacts with USP20 and USP33. Interacts with MARCHF6. In terms of processing, ubiquitinated by MARCHF6, leading to its degradation by the proteasome. Deubiquitinated by USP20 and USP33. In terms of tissue distribution, more expressed in pituitary than in brain, low to undetectable levels in thyroid and skeletal muscle.

It is found in the endoplasmic reticulum membrane. The enzyme catalyses 3,3',5-triiodo-L-thyronine + iodide + A + H(+) = L-thyroxine + AH2. The catalysed reaction is 3,3'-diiodo-L-thyronine + iodide + A + H(+) = 3,3',5'-triiodo-L-thyronine + AH2. It carries out the reaction 3'-iodo-L-thyronine + iodide + A + H(+) = 3',5'-diiodo-L-thyronine + AH2. It catalyses the reaction 3,3'-diiodothyronamine + iodide + A + H(+) = 3,3',5'-triiodothyronamine + AH2. The enzyme catalyses 3'-iodothyronamine + iodide + A + H(+) = 3',5'-diiodothyronamine + AH2. Functionally, plays a crucial role in the metabolism of thyroid hormones (TH) and has specific roles in TH activation and inactivation by deiodination.Catalyzes the deiodination of L-thyroxine (T4) to 3,5,3'-triiodothyronine (T3) and 3,3',5'-triiodothyronine (rT3) to 3,3'-diiodothyronine (3,3'-T2) via outer-ring deiodination (ORD). Catalyzes the deiodination of 3',5'-diiodothyronine (3',5'-T2) to 3'-monoiodothyronine (3'-T1) via ORD. Catalyzes the phenolic ring deiodinations of 3,3',5'-triiodothyronamine and 3',5'- diiodothyronamine. This Sus scrofa (Pig) protein is Type II iodothyronine deiodinase (DIO2).